Reading from the N-terminus, the 324-residue chain is Cyclic GMP-AMP synthase CdnE03 (324 aa).

Asp87 and Asp89 together coordinate Mg(2+). Residues Asp89, 144–145 (NK), and Asp159 contribute to the ATP site. Mg(2+) is bound at residue Asp159. Residues Lys224 and Ser243 each contribute to the GTP site.

Belongs to the CD-NTase family. E03 subfamily. The cofactor is Mg(2+).

It carries out the reaction GTP + ATP = 3',2'-cGAMP + 2 diphosphate. With respect to regulation, activated by a virus-derived, approximately 400 nucleotide RNA (called CBASS-activating bacteriophage RNA, cabRNA) that begins in the viral terminase subunit terS and extends into terL. RNA secondary and/or tertiary structure, as well as viral infection itself, are important for CdnE activation. A much longer RNA (escaper RNA) with a different secondary structure, derived from a terS-mutated virus still binds to this protein, but does not activate its nucleotide cyclase activity. Shorter viral-derived RNAs (34 and 49 nt) with extensive predicted secondary structure also activate the enzyme, although not as well as full-length cabRNA. Its function is as follows. Cyclic nucleotide synthase (second messenger synthase) of a CBASS antivirus system. CBASS (cyclic oligonucleotide-based antiphage signaling system) provides immunity against bacteriophage. The CD-NTase protein synthesizes cyclic nucleotides in response to infection; these serve as specific second messenger signals. The signals activate a diverse range of effectors, leading to bacterial cell death and thus abortive phage infection. The effector for this system is downstream Cap15. A type I-B CBASS system. In terms of biological role, cyclic dinucleotide synthase that catalyzes the synthesis of 3',2'-cyclic GMP-AMP (cGAMP) from GTP and ATP upon activation by viral-derived cabRNA. Binds cabRNA via positive charges in its N-terminus. Functionally, protects S.aureus against phage infection. When the CBASS operon (cdnE-cap15) is introduced in S.aureus strain RN4220 there is strong protection against lytic DNA phages 80alpha-vir and phi-NM1-gamma-6 but little to no protection against phages phi-NM4-gamma-4 or phi-12-gamma-3. The chain is Cyclic GMP-AMP synthase CdnE03 from Staphylococcus schleiferi.